The chain runs to 1498 residues: MSFMDQIPGGGNYPKLPVECLPNFPIQPSLTFRGRNDSHKLKNFISEIMLNMSMISWPNDASRIVYCRRHLLNPAAQWANDFVQEQGILEITFDTFIQGLYQHFYKPPDINKIFNAITQLSEAKLGIERLNQRFRKIWDRMPPDFMTEKAAIMTYTRLLTKETYNIVRMHKPETLKDAMEEAYQTTALTERFFPGFELDADGDTIIGATTHLQEEYDSDYDSEDNLTQNRYVHTVRTRRSYNKPMSNHRNRRNNNASREECIKNRLCFYCKKEGHRLNECRARKAVLTDLELESKDQQTLFIKTLPIVHYIAIPEMDNTAEKTIKIQNTKVKTLFDSGSPTSFIRRDIVELLKYEIYETPPLRFRGFVATKSAVTSEAVTIDLKINDLQITLAAYILDNMDYQLLIGNPILRRYPKILHTVLNTRESPDSLKPKTYRSETVNNVRTYSAGNRGNPRNIKLSFAPTILEATDPKSAGNRGNPRNTKLSLAPTILEATDPKSAGNRGDSRTKTLSLATTTPAAIDPLTTLDNPGSTQSTFAQFPIPEEASILEEDGKYSNVVSTIQSVEPNATDHSNKDTFCTLPVWLQQKYREIIRNDLPPRPADINNIPVKHDIEIKPGARLPRLQPYHVTEKNEQEINKIVQKLLDNKFIVPSKSPCSSPVVLVPKKDGTFRLCVDYRTLNKATISDPFPLPRIDNLLSRIGNAQIFTTLDLHSGYHQIPMEPKDRYKTAFVTPSGKYEYTVMPFGLVNAPSTFARYMADTFRDLRFVNVYLDDILIFSESPEEHWKHLDTVLERLKNENLIVKKKKCKFASEETEFLGYSIGIQKIAPLQHKCAAIRDFPTPKTVKQAQRFLGMINYYRRFIPNCSKIAQPIQLFICDKSQWTEKQDKAIEKLKAALCNSPVLVPFNNKANYRLTTDASKDGIGAVLEEVDNKNKLVGVVGYFSKSLESAQKNYPAGELELLGIIKALHHFRYMLHGKHFTLRTDHISLLSLQNKNEPARRVQRWLDDLATYDFTLEYLAGPKNVVADAISRAIYTITPETSRPIDTESWKSYYKSDPLCSAVLIHMKELTQHNVTPEDMSAFRSYQKKLELSETFRKNYSLEDEMIYYQDRLVVPIKQQNAVMRLYHDHTLFGGHFGVTVTLAKISPIYYWPKLQHSIIQYIRTCVQCQLIKSHRPRLHGLLQPLPIAEGRWLDISMDFVTGLPPTSNNLNMILVVVDRFSKRAHFIATRKTLDATQLIDLLFRYIFSYHGFPRTITSDRDVRMTADKYQELTKRLGIKSTMSSANHPQTDGQSERTIQTLNRLLRAYVSTNIQNWHVYLPQIEFVYNSTPTRTLGKSPFEIDLGYLPNTPAIKSDDEVNARSFTAVELAKHLKALTIQTKEQLEHAQIEMETNNNQRRKPLLLNIGDHVLVHRDAYFKKGAYMKVQQIYVGPFRVVKKINDNAYELDLNSHKKKHRVINVQFLKSLYTVQTRTQRINQSAPLRELREHTKLLHS.

The CCHC-type zinc-finger motif lies at 265 to 282 (RLCFYCKKEGHRLNECRA). The For protease activity; shared with dimeric partner role is filled by D336. The disordered stretch occupies residues 470-490 (TDPKSAGNRGNPRNTKLSLAP). The Reverse transcriptase domain occupies 646 to 823 (LDNKFIVPSK…EETEFLGYSI (178 aa)). Mg(2+) contacts are provided by D712, D774, and D775. One can recognise an RNase H Ty3/gyspy-type domain in the interval 919-1037 (DASKDGIGAV…VADAISRAIY (119 aa)). The integrase-type zinc finger-like stretch occupies residues 1132 to 1171 (HTLFGGHFGVTVTLAKISPIYYWPKLQHSIIQYIRTCVQC). Residues 1185–1350 (LQPLPIAEGR…SPFEIDLGYL (166 aa)) enclose the Integrase catalytic domain. 2 residues coordinate Mg(2+): D1201 and D1262.

In terms of assembly, the protease is a homodimer, whose active site consists of two apposed aspartic acid residues. Post-translationally, initially, virus-like particles (VLPs) are composed of the structural unprocessed proteins Gag and Gag-Pol, and also contain the host initiator methionine tRNA (tRNA(i)-Met) which serves as a primer for minus-strand DNA synthesis, and a dimer of genomic Ty RNA. Processing of the polyproteins occurs within the particle and proceeds by an ordered pathway, called maturation. First, the protease (PR) is released by autocatalytic cleavage of the Gag-Pol polyprotein, and this cleavage is a prerequisite for subsequent processing at the remaining sites to release the mature structural and catalytic proteins. Maturation takes place prior to the RT reaction and is required to produce transposition-competent VLPs.

It is found in the cytoplasm. Its subcellular location is the nucleus. The enzyme catalyses DNA(n) + a 2'-deoxyribonucleoside 5'-triphosphate = DNA(n+1) + diphosphate. It carries out the reaction Endonucleolytic cleavage to 5'-phosphomonoester.. In terms of biological role, capsid protein (CA) is the structural component of the virus-like particle (VLP), forming the shell that encapsulates the genomic RNA-nucleocapsid complex. Nucleocapsid protein p11 (NC) forms the nucleocore that coats the retro-elements dimeric RNA. Binds these RNAs through its zinc fingers. Promotes primer tRNA(i)-Met annealing to the multipartite primer-binding site (PBS), dimerization of Ty3 RNA and initiation of reverse transcription. Functionally, the aspartyl protease (PR) mediates the proteolytic cleavages of the Gag and Gag-Pol polyproteins after assembly of the VLP. Its function is as follows. Reverse transcriptase/ribonuclease H (RT) is a multifunctional enzyme that catalyzes the conversion of the retro-elements RNA genome into dsDNA within the VLP. The enzyme displays a DNA polymerase activity that can copy either DNA or RNA templates, and a ribonuclease H (RNase H) activity that cleaves the RNA strand of RNA-DNA heteroduplexes during plus-strand synthesis and hydrolyzes RNA primers. The conversion leads to a linear dsDNA copy of the retrotransposon that includes long terminal repeats (LTRs) at both ends. In terms of biological role, integrase (IN) targets the VLP to the nucleus, where a subparticle preintegration complex (PIC) containing at least integrase and the newly synthesized dsDNA copy of the retrotransposon must transit the nuclear membrane. Once in the nucleus, integrase performs the integration of the dsDNA into the host genome. This Saccharomyces cerevisiae (strain ATCC 204508 / S288c) (Baker's yeast) protein is Transposon Ty3-I Gag-Pol polyprotein (TY3B-I).